Here is a 1040-residue protein sequence, read N- to C-terminus: MATEQQDSQLCLATILEDFLKQRNIQVSVGVDSSSLKKADETFGGRDLPVDPSDLRRYEAARWVRNTLGVVGGRDLPADPSEEDFRIALRSGILLCNVLNRVKPGAVPKVVEAPNDPLVNQDGAALSAFQYFENLRNFLVFVEEMGIPTFEVSDFEKGGKSARIVECVLALKSYREWKQSGGSGTWRYILNSKPTTFGIAKQYKRKDSEVPVDAVTNSPSSTPSSEQPLLDQSDSNTKNDGTASSIDAIVRAVFSDMKQEDIPVIVEDMLKSVMVEYERRLATQNELLLMSAGNRDKLGSGDLGRTISGNEETLSDASYGEENVTEIVNNNMEASQDSNVEELENQDYELYAISKEKTEKQQLIIERQQTHTEELKHDLKAVKAGLSLLQMKYQQEFTSLGKHLHGLTYAATGYQRVLEENRKLYNQVQDLKGSIRVYCRVRPFLPGQKSVLTTVDHLEDSTLSIATPSKYGKEGQKTFTFNKVFGPSASQEAVFADTQPLIRSVLDGYNVCIFAYGQTGSGKTFTMMGPNELTDETLGVNYRALSDLFHLSSVRKETFSYNISVQMLEIYNEQVRDLLATNEIRNSTQDGINVPEATLVPVSTTSDVIHLMNIGQKNRAVSATAMNDRSSRSHSCLTVHVQGKDLTSGVTLRGSMHLVDLAGSERIDKSEVTGDRLKEAQHINKSLSALGDVIASLSQKNNHIPYRNSKLTQLLQDALGGQAKTLMFIHISPELEDLGETLSTLKFAERVATVDLGAARVNKDTSEVKELKEQIASLKLALARKESGADQTQLQRPLTPDKLLRKKSLGVSSSFSKSANSTRQVQTKHKPSQIDDVNSIEGQSDSASSLDLQGLVGSPSWKTPPRDGKEEDMEFIIPGSEWVDKHEDEITRSSKPENRAHTQLEKRTSSLKREATRGVDKNKCNSSVDKGLEVRKIPYEEEANESDETATSDCSETNLMWQLNVQVNMPRPASNGSSTKLKKNQSKISRVAAETRSMIPSLIPTPTRTLSLGAAISSPGQTSSRHNNSTVVVKKRQNPK.

The region spanning 54 to 176 is the Calponin-homology (CH) domain; sequence DLRRYEAARW…CVLALKSYRE (123 aa). Residues 208–242 form a disordered region; sequence SEVPVDAVTNSPSSTPSSEQPLLDQSDSNTKNDGT. Over residues 215-242 the composition is skewed to polar residues; sequence VTNSPSSTPSSEQPLLDQSDSNTKNDGT. The region spanning 434 to 754 is the Kinesin motor domain; sequence SIRVYCRVRP…LKFAERVATV (321 aa). 517–524 contributes to the ATP binding site; sequence GQTGSGKT. Residues 761–796 adopt a coiled-coil conformation; that stretch reads VNKDTSEVKELKEQIASLKLALARKESGADQTQLQR. Residues 809–818 are compositionally biased toward low complexity; the sequence is LGVSSSFSKS. Disordered stretches follow at residues 809 to 871, 887 to 926, and 969 to 1040; these read LGVS…GKEE, EDEITRSSKPENRAHTQLEKRTSSLKREATRGVDKNKCNS, and MPRP…QNPK. Positions 840 to 851 are enriched in polar residues; that stretch reads IEGQSDSASSLD. The span at 887–923 shows a compositional bias: basic and acidic residues; it reads EDEITRSSKPENRAHTQLEKRTSSLKREATRGVDKNK. A compositionally biased stretch (polar residues) spans 1018 to 1031; that stretch reads SPGQTSSRHNNSTV.

It belongs to the TRAFAC class myosin-kinesin ATPase superfamily. Kinesin family. KIN-14 subfamily.

The polypeptide is Kinesin-like protein KIN-14H (Arabidopsis thaliana (Mouse-ear cress)).